The chain runs to 104 residues: Nucleoid-associated protein OB0030 (104 aa).

The interval M1 to Q23 is disordered.

The protein belongs to the YbaB/EbfC family. In terms of assembly, homodimer.

It is found in the cytoplasm. The protein localises to the nucleoid. Binds to DNA and alters its conformation. May be involved in regulation of gene expression, nucleoid organization and DNA protection. The sequence is that of Nucleoid-associated protein OB0030 from Oceanobacillus iheyensis (strain DSM 14371 / CIP 107618 / JCM 11309 / KCTC 3954 / HTE831).